The sequence spans 423 residues: NADP-specific glutamate dehydrogenase (423 aa).

The active site involves K112.

This sequence belongs to the Glu/Leu/Phe/Val dehydrogenases family. As to quaternary structure, homohexamer.

It carries out the reaction L-glutamate + NADP(+) + H2O = 2-oxoglutarate + NH4(+) + NADPH + H(+). This Saccharolobus shibatae (strain ATCC 51178 / DSM 5389 / JCM 8931 / NBRC 15437 / B12) (Sulfolobus shibatae) protein is NADP-specific glutamate dehydrogenase (gdhA).